A 46-amino-acid polypeptide reads, in one-letter code: Esculentin-1A (46 aa).

The cysteines at positions 40 and 46 are disulfide-linked.

Belongs to the frog skin active peptide (FSAP) family. Brevinin subfamily. As to expression, expressed by the skin glands.

Its subcellular location is the secreted. Its function is as follows. Shows antibacterial activity against representative Gram-negative and Gram-positive bacterial species, and hemolytic activity. This chain is Esculentin-1A, found in Pelophylax lessonae (Pool frog).